The primary structure comprises 651 residues: Coronin-like protein (651 aa).

WD repeat units follow at residues Gly79–Asp110, Gly138–Asn169, Lys180–Asn210, and Ala226–Asp257. Residues Ala408–Lys609 form a disordered region. The segment covering Leu427–Ala451 has biased composition (basic and acidic residues). Phosphoserine occurs at positions 441, 454, and 456. Residues Pro452–Ser465 show a composition bias toward low complexity. 2 positions are modified to phosphothreonine: Thr517 and Thr529. Composition is skewed to basic and acidic residues over residues Glu523–Pro540 and Thr547–Lys572. Phosphoserine occurs at positions 573 and 579. Residues Ser578 to Ser590 show a composition bias toward low complexity. Residues Val618–Ser650 adopt a coiled-coil conformation.

This sequence belongs to the WD repeat coronin family. Binds to F-actin.

The sequence is that of Coronin-like protein (CRN1) from Saccharomyces cerevisiae (strain ATCC 204508 / S288c) (Baker's yeast).